We begin with the raw amino-acid sequence, 455 residues long: 1-deoxy-D-xylulose 5-phosphate reductoisomerase (455 aa).

Thr30, Gly31, Ser32, Ile33, Gln63, and Asn159 together coordinate NADPH. Lys160 is a binding site for 1-deoxy-D-xylulose 5-phosphate. Glu161 serves as a coordination point for NADPH. Asp185 provides a ligand contact to Mn(2+). 1-deoxy-D-xylulose 5-phosphate-binding residues include Ser186 and Glu187. Mn(2+) is bound at residue Glu187. Positions Tyr205–Pro214 are enriched in polar residues. The interval Tyr205–Thr233 is disordered. 2 residues coordinate 1-deoxy-D-xylulose 5-phosphate: Ser246 and His269. An NADPH-binding site is contributed by Gly275. 4 residues coordinate 1-deoxy-D-xylulose 5-phosphate: Ser282, Asn287, Lys288, and Glu291. Glu291 is a Mn(2+) binding site.

This sequence belongs to the DXR family. Requires Mg(2+) as cofactor. Mn(2+) is required as a cofactor.

The enzyme catalyses 2-C-methyl-D-erythritol 4-phosphate + NADP(+) = 1-deoxy-D-xylulose 5-phosphate + NADPH + H(+). The protein operates within isoprenoid biosynthesis; isopentenyl diphosphate biosynthesis via DXP pathway; isopentenyl diphosphate from 1-deoxy-D-xylulose 5-phosphate: step 1/6. In terms of biological role, catalyzes the NADPH-dependent rearrangement and reduction of 1-deoxy-D-xylulose-5-phosphate (DXP) to 2-C-methyl-D-erythritol 4-phosphate (MEP). The chain is 1-deoxy-D-xylulose 5-phosphate reductoisomerase from Rhodopirellula baltica (strain DSM 10527 / NCIMB 13988 / SH1).